The sequence spans 327 residues: Glycerol-3-phosphate dehydrogenase [NAD(P)+] (327 aa).

3 residues coordinate NADPH: Trp-15, Arg-35, and Lys-109. Sn-glycerol 3-phosphate-binding residues include Lys-109, Gly-137, and Ser-139. An NADPH-binding site is contributed by Ala-141. Positions 192, 245, 255, 256, and 257 each coordinate sn-glycerol 3-phosphate. The active-site Proton acceptor is the Lys-192. An NADPH-binding site is contributed by Arg-256. NADPH is bound by residues Leu-275 and Glu-277.

The protein belongs to the NAD-dependent glycerol-3-phosphate dehydrogenase family.

Its subcellular location is the cytoplasm. It carries out the reaction sn-glycerol 3-phosphate + NAD(+) = dihydroxyacetone phosphate + NADH + H(+). The enzyme catalyses sn-glycerol 3-phosphate + NADP(+) = dihydroxyacetone phosphate + NADPH + H(+). The protein operates within membrane lipid metabolism; glycerophospholipid metabolism. Its function is as follows. Catalyzes the reduction of the glycolytic intermediate dihydroxyacetone phosphate (DHAP) to sn-glycerol 3-phosphate (G3P), the key precursor for phospholipid synthesis. The chain is Glycerol-3-phosphate dehydrogenase [NAD(P)+] from Chelativorans sp. (strain BNC1).